The following is a 171-amino-acid chain: Adenine phosphoribosyltransferase (171 aa).

The protein belongs to the purine/pyrimidine phosphoribosyltransferase family. In terms of assembly, homodimer.

Its subcellular location is the cytoplasm. It catalyses the reaction AMP + diphosphate = 5-phospho-alpha-D-ribose 1-diphosphate + adenine. Its pathway is purine metabolism; AMP biosynthesis via salvage pathway; AMP from adenine: step 1/1. In terms of biological role, catalyzes a salvage reaction resulting in the formation of AMP, that is energically less costly than de novo synthesis. This is Adenine phosphoribosyltransferase from Nitrosococcus oceani (strain ATCC 19707 / BCRC 17464 / JCM 30415 / NCIMB 11848 / C-107).